The primary structure comprises 401 residues: MTYNQPNNQGFYGQFGGQFVPETLMTAVKELEVAYEDSKKDPVFQAELKELLKDYVGRENPLYFAKRLTEYAGGAKIYLKREDLNHTGAHKINNALGQVLLAKKMGKNKVIAETGAGQHGVATATAAALFGMECTIYMGEEDVKRQSLNVFRMELLGAKVHSVTDGSRVLKDAVNAALRAWVAQVEDTHYVMGSVLGPHPFPQIVRDYQAIIGQEARAQFLEKENKLPDALVACVGGGSNSMGLFYPFVNDESVEMYGVEAAGLGIDTPHHAATITKGRPGVLHGTLMDVLQDENGQILEAFSISAGLDYPGIGPEHSYFNAVGRAKYVDITDEEALEGFKILSRTEGIIPALESSHAIAYAVKLAKELGSEKTMIVCLSGRGDKDVVQVKERLEAEKEVK.

Lys91 is modified (N6-(pyridoxal phosphate)lysine).

This sequence belongs to the TrpB family. As to quaternary structure, tetramer of two alpha and two beta chains. Requires pyridoxal 5'-phosphate as cofactor.

The catalysed reaction is (1S,2R)-1-C-(indol-3-yl)glycerol 3-phosphate + L-serine = D-glyceraldehyde 3-phosphate + L-tryptophan + H2O. Its pathway is amino-acid biosynthesis; L-tryptophan biosynthesis; L-tryptophan from chorismate: step 5/5. In terms of biological role, the beta subunit is responsible for the synthesis of L-tryptophan from indole and L-serine. The polypeptide is Tryptophan synthase beta chain (Lactococcus lactis subsp. cremoris (strain MG1363)).